A 515-amino-acid chain; its full sequence is GMP synthase [glutamine-hydrolyzing] (515 aa).

The Glutamine amidotransferase type-1 domain maps to 10–200 (TIIVLDFGSQ…VFGVCGCSEG (191 aa)). Cys-87 serves as the catalytic Nucleophile. Catalysis depends on residues His-174 and Glu-176. In terms of domain architecture, GMPS ATP-PPase spans 201-390 (WNMENFIEVE…LGIPDEIVWR (190 aa)). Residue 228–234 (SGGVDSS) participates in ATP binding.

As to quaternary structure, homodimer.

The enzyme catalyses XMP + L-glutamine + ATP + H2O = GMP + L-glutamate + AMP + diphosphate + 2 H(+). It functions in the pathway purine metabolism; GMP biosynthesis; GMP from XMP (L-Gln route): step 1/1. Its function is as follows. Catalyzes the synthesis of GMP from XMP. The protein is GMP synthase [glutamine-hydrolyzing] of Bacillus anthracis (strain A0248).